Reading from the N-terminus, the 332-residue chain is 2,3-diketo-L-gulonate reductase (332 aa).

The active-site Proton donor is the H44. Residues 168–174 (ITMVDMS), 224–225 (WK), and 304–306 (GHE) each bind NAD(+).

Belongs to the LDH2/MDH2 oxidoreductase family. DlgD subfamily. Homodimer.

It is found in the cytoplasm. The catalysed reaction is 3-dehydro-L-gulonate + NAD(+) = 2,3-dioxo-L-gulonate + NADH + H(+). It catalyses the reaction 3-dehydro-L-gulonate + NADP(+) = 2,3-dioxo-L-gulonate + NADPH + H(+). In terms of biological role, catalyzes the reduction of 2,3-diketo-L-gulonate in the presence of NADH, to form 3-keto-L-gulonate. In Escherichia coli O1:K1 / APEC, this protein is 2,3-diketo-L-gulonate reductase.